Here is a 1342-residue protein sequence, read N- to C-terminus: DNA-directed RNA polymerase subunit beta (1342 aa).

Belongs to the RNA polymerase beta chain family. In terms of assembly, the RNAP catalytic core consists of 2 alpha, 1 beta, 1 beta' and 1 omega subunit. When a sigma factor is associated with the core the holoenzyme is formed, which can initiate transcription.

The catalysed reaction is RNA(n) + a ribonucleoside 5'-triphosphate = RNA(n+1) + diphosphate. DNA-dependent RNA polymerase catalyzes the transcription of DNA into RNA using the four ribonucleoside triphosphates as substrates. This chain is DNA-directed RNA polymerase subunit beta, found in Vibrio vulnificus (strain CMCP6).